Consider the following 350-residue polypeptide: C5a anaphylatoxin chemotactic receptor 1 (350 aa).

Over 1–36 the chain is Extracellular; the sequence is APMENSTYDYTNYDSLGTLDPSTPVDNTVRRLRPTT. N-linked (GlcNAc...) asparagine glycosylation is present at asparagine 5. A sulfotyrosine mark is found at tyrosine 10 and tyrosine 13. Residues 37–63 traverse the membrane as a helical segment; sequence IVALVIYMAVFLVGVPGNALVVWVTAL. The Cytoplasmic segment spans residues 64–68; that stretch reads EAKRT. Residues 69 to 92 traverse the membrane as a helical segment; that stretch reads VNAIWFLNLAVADLLSCLALPILF. The Extracellular segment spans residues 93–109; the sequence is VSIIQEGHWPFGRAACS. Residues cysteine 108 and cysteine 187 are joined by a disulfide bond. A helical transmembrane segment spans residues 110–131; the sequence is VLPSLILLNMYASILLLATISA. Residues 132 to 152 are Cytoplasmic-facing; sequence DRFLLVFNPIWCQNTRGAGLA. The helical transmembrane segment at 153-173 threads the bilayer; that stretch reads WLACCVAWGLALLLTIPSFLY. At 174-200 the chain is on the extracellular side; that stretch reads RKVLQDDYPPKTTCGVDYGHEGVRAER. A helical membrane pass occupies residues 201-226; it reads AVAIVRLVVGFLLPLFTLSVCYTFLL. Residues 227–242 are Cytoplasmic-facing; it reads LRTWSRNGTRSTKTLK. The helical transmembrane segment at 243-265 threads the bilayer; that stretch reads VVVAVVVSFFIFWLPYQVMGMIL. At 266–282 the chain is on the extracellular side; sequence ALLHPSSATFRWAIRLD. A helical membrane pass occupies residues 283 to 303; sequence PLCIALAYVNCCINPIIYVVA. The Cytoplasmic portion of the chain corresponds to 304–350; the sequence is GKGFQGQLRKSLPSLLRNVLAEESVIQGSKSFSRSTVDTVADKCQAV. Residues serine 314, serine 317, serine 327, serine 332, serine 334, and serine 338 each carry the phosphoserine modification.

This sequence belongs to the G-protein coupled receptor 1 family. As to quaternary structure, homodimer. May also form higher-order oligomers. Interacts (when phosphorylated) with ARRB1 and ARRB2; the interaction is associated with internalization of C5aR. Post-translationally, sulfation plays a critical role in the association of C5aR with C5a, but no significant role in the ability of the receptor to transduce a signal and mobilize calcium in response to a small peptide agonist. Phosphorylated on serine residues in response to C5a binding, resulting in internalization of the receptor and short-term desensitization to C5a.

Its subcellular location is the cell membrane. It is found in the cytoplasmic vesicle. In terms of biological role, receptor for the chemotactic and inflammatory peptide anaphylatoxin C5a. The ligand interacts with at least two sites on the receptor: a high-affinity site on the extracellular N-terminus, and a second site in the transmembrane region which activates downstream signaling events. Receptor activation stimulates chemotaxis, granule enzyme release, intracellular calcium release and superoxide anion production. The chain is C5a anaphylatoxin chemotactic receptor 1 (C5AR1) from Oryctolagus cuniculus (Rabbit).